The sequence spans 488 residues: Inositol 1,3,4-trisphosphate 5/6-kinase 4 (488 aa).

Positions 208 and 224 each coordinate 1D-myo-inositol 1,3,4-trisphosphate. An ATP-grasp domain is found at 246-488 (NACAIVDPIR…RFDQHVQEKH (243 aa)). 2 residues coordinate ATP: arginine 263 and lysine 315. 1D-myo-inositol 1,3,4-trisphosphate is bound by residues histidine 326 and lysine 360. ATP is bound by residues 349 to 360 (QEYVDHSSRIFK), serine 375, and serine 398. 3 residues coordinate Mg(2+): aspartate 439, aspartate 453, and asparagine 455. Positions 455 and 459 each coordinate 1D-myo-inositol 1,3,4-trisphosphate.

Belongs to the ITPK1 family. As to quaternary structure, monomer. The cofactor is Mg(2+). As to expression, expressed in roots, leaf vasculature, cauline leaves, flower buds and siliques.

It carries out the reaction 1D-myo-inositol 1,3,4-trisphosphate + ATP = 1D-myo-inositol 1,3,4,5-tetrakisphosphate + ADP + H(+). The catalysed reaction is 1D-myo-inositol 1,3,4-trisphosphate + ATP = 1D-myo-inositol 1,3,4,6-tetrakisphosphate + ADP + H(+). In terms of biological role, kinase that can phosphorylate the inositol polyphosphate Ins(1,3,4)P3 to form InsP4. Also phosphorylates a racemic mixture of Ins(1,4,6)P3 and Ins(3,4,6)P3 to form InsP4. Does not display inositol 3,4,5,6-tetrakisphosphate 1-kinase activity, but possesses inositol 1,4,5,6-tetrakisphosphate and inositol 1,3,4,5-tetrakisphosphate isomerase activity. Ins(1,3,4,6)P4 is an essential molecule in the hexakisphosphate (InsP6) pathway. This chain is Inositol 1,3,4-trisphosphate 5/6-kinase 4 (ITPK4), found in Arabidopsis thaliana (Mouse-ear cress).